Consider the following 607-residue polypeptide: Transporter aclS (607 aa).

The next 12 membrane-spanning stretches (helical) occupy residues 67–87, 91–111, 152–172, 192–212, 221–241, 262–282, 317–337, 364–384, 423–443, 445–465, 500–520, and 531–551; these read LGGSLVASSLSVWQTMVAVVL, IAAIVAILIGYIGAEWHIGFP, LTVVGFAFQSYTGGLCVTAIL, VTTQQIIGWAIFNIISIPVLY, LMIGMNIMSFAALLGIMIWSL, SLGFGIMQGITTVVGTLSIAL, VFGQWFTFIIIGSIMPLFGCL, AAAVFAGIGLVSSQLALNVVD, GCYVGLILGMALCPWELLASA, TFVSVISSFSIFMAPFCGIHI, GVLPWLVGWVPLLPGFMHSIN, and HLYALGFPYGLLSSMAIHTLV. The tract at residues 583–607 is disordered; sequence NKDSTEEDSDRSLRRESREVVETKV. Residues 592–607 show a composition bias toward basic and acidic residues; that stretch reads DRSLRRESREVVETKV.

It belongs to the purine-cytosine permease (2.A.39) family.

The protein resides in the membrane. Transporter; part of the gene cluster that mediates the biosynthesis of aspirochlorine (or antibiotic A30641), an unusual halogenated spiro compound with distinctive antifungal properties due to selective inhibition of protein biosynthesis, and which is also active against bacteria, viruses, and murine tumor cells. The sequence is that of Transporter aclS from Aspergillus oryzae (strain ATCC 42149 / RIB 40) (Yellow koji mold).